Consider the following 309-residue polypeptide: NAD kinase (309 aa).

The Proton acceptor role is filled by Asp89. NAD(+) contacts are provided by residues 89-90, 163-164, His174, Arg191, Asp193, and 204-209; these read DG, NE, and TAYALS.

This sequence belongs to the NAD kinase family. Requires a divalent metal cation as cofactor.

It localises to the cytoplasm. It catalyses the reaction NAD(+) + ATP = ADP + NADP(+) + H(+). Functionally, involved in the regulation of the intracellular balance of NAD and NADP, and is a key enzyme in the biosynthesis of NADP. Catalyzes specifically the phosphorylation on 2'-hydroxyl of the adenosine moiety of NAD to yield NADP. The polypeptide is NAD kinase (Shewanella sp. (strain MR-4)).